A 358-amino-acid chain; its full sequence is Membrane-bound lytic murein transglycosylase C (358 aa).

A signal peptide spans 1–19; the sequence is MKITLKKLLILAIVPFLYA. The N-palmitoyl cysteine moiety is linked to residue C20. C20 carries the S-diacylglycerol cysteine lipid modification.

Belongs to the transglycosylase Slt family.

It localises to the cell outer membrane. The enzyme catalyses Exolytic cleavage of the (1-&gt;4)-beta-glycosidic linkage between N-acetylmuramic acid (MurNAc) and N-acetylglucosamine (GlcNAc) residues in peptidoglycan, from either the reducing or the non-reducing ends of the peptidoglycan chains, with concomitant formation of a 1,6-anhydrobond in the MurNAc residue.. In terms of biological role, murein-degrading enzyme. May play a role in recycling of muropeptides during cell elongation and/or cell division. The protein is Membrane-bound lytic murein transglycosylase C of Actinobacillus succinogenes (strain ATCC 55618 / DSM 22257 / CCUG 43843 / 130Z).